The chain runs to 117 residues: UPF0295 protein GK0479 (117 aa).

2 consecutive transmembrane segments (helical) span residues 12-32 (IRTF…LGLF) and 42-62 (LFML…FWIG).

Belongs to the UPF0295 family.

It is found in the cell membrane. The polypeptide is UPF0295 protein GK0479 (Geobacillus kaustophilus (strain HTA426)).